Here is a 365-residue protein sequence, read N- to C-terminus: MLQQQALPGTPRQDGFFMPAEWAPQDAVWMLWPYRQDNWRGKAIPAQQTFAKVAEAISRATPVFMGVPAEFMAQAKATMPANVTLVEMASDDAWMRDTGPTMVINGAAERRAVDWQFNAWGGLNGGLYADWQQDEKVAVQVSDFLKNAHYSAPLILEGGSIHTDGEGTLLTTAECLLNPNRNPHLNQAQIEQLLCDYLGVTHFIWLQDGVYNDETDGHIDNMCCFVRPGEVALHWTDDQQDPQYARSVAAFEVLSNTVDAKGRKLKIWKLPAPGPLYNTEEETFDVLTSDAVPRTAGERLAGSYVNFLISNQQIIFPLLDSRTDGQANDLLQQMFPGYAIVGVPAREILLGGGNIHCITQQIPAA.

Cysteine 357 serves as the catalytic Amidino-cysteine intermediate.

Belongs to the agmatine deiminase family.

It carries out the reaction agmatine + H2O = N-carbamoylputrescine + NH4(+). The polypeptide is Putative agmatine deiminase (Yersinia pseudotuberculosis serotype O:1b (strain IP 31758)).